The primary structure comprises 183 residues: CKLF-like MARVEL transmembrane domain-containing protein 6 (183 aa).

At methionine 1 the chain carries N-acetylmethionine. The interval 1 to 20 is disordered; that stretch reads MENGAVYSPTTEEDPGPARG. At 1 to 39 the chain is on the cytoplasmic side; that stretch reads MENGAVYSPTTEEDPGPARGPRSGLAAYCFLGRLPLLRR. Residue serine 8 is modified to Phosphoserine. Residues 33-160 enclose the MARVEL domain; sequence RLPLLRRVLK…DFVTMLYEKR (128 aa). Residues 40-60 form a helical membrane-spanning segment; the sequence is VLKGLQLSLSLLAFICEEVVS. At 61–67 the chain is on the extracellular side; that stretch reads QCTLCGG. Residues 68–88 traverse the membrane as a helical segment; the sequence is LYFFEFVSCSAFLLSLLILIV. Topologically, residues 89-106 are cytoplasmic; sequence YCTPFYERVDTTKVKSSD. The helical transmembrane segment at 107–127 threads the bilayer; it reads FYITLGTGCVFLLASIIFVST. At 128-134 the chain is on the extracellular side; that stretch reads HDRTSAE. The chain crosses the membrane as a helical span at residues 135 to 155; the sequence is IAAIVFGFIASFMFLLDFVTM. The Cytoplasmic portion of the chain corresponds to 156-183; sequence LYEKRQESQLRKSENTTRAEALTEPLNA. Threonine 171 is subject to Phosphothreonine.

Belongs to the chemokine-like factor family. Interacts with PD-L1/CD274 (via transmembrane domain); the interaction is direct. Interacts with CMTM4. Interacts with CD58, ARG1, ENO1 and TMPO.

The protein localises to the cell membrane. It is found in the early endosome membrane. It localises to the recycling endosome membrane. Its function is as follows. Master regulator of recycling and plasma membrane expression of PD-L1/CD274, an immune inhibitory ligand critical for immune tolerance to self and antitumor immunity. Associates with both constitutive and IFNG-induced PD-L1/CD274 at recycling endosomes, where it protects PD-L1/CD274 from being targeted for lysosomal degradation, likely by preventing its ubiquitination. May stabilize PD-L1/CD274 expression on antigen presenting cells and potentiates inhibitory signaling by PDCD1/CD279, its receptor on T-cells, ultimately triggering T-cell anergy. This is CKLF-like MARVEL transmembrane domain-containing protein 6 (CMTM6) from Pongo abelii (Sumatran orangutan).